The primary structure comprises 470 residues: Protein nucleotidyltransferase YdiU (470 aa).

ATP is bound by residues Gly86, Gly88, Arg89, Lys109, Asp121, Gly122, Arg172, and Arg179. Asp244 functions as the Proton acceptor in the catalytic mechanism. Positions 245 and 254 each coordinate Mg(2+). An ATP-binding site is contributed by Asp254.

Belongs to the SELO family. The cofactor is Mg(2+). Mn(2+) is required as a cofactor.

The enzyme catalyses L-seryl-[protein] + ATP = 3-O-(5'-adenylyl)-L-seryl-[protein] + diphosphate. It carries out the reaction L-threonyl-[protein] + ATP = 3-O-(5'-adenylyl)-L-threonyl-[protein] + diphosphate. The catalysed reaction is L-tyrosyl-[protein] + ATP = O-(5'-adenylyl)-L-tyrosyl-[protein] + diphosphate. It catalyses the reaction L-histidyl-[protein] + UTP = N(tele)-(5'-uridylyl)-L-histidyl-[protein] + diphosphate. The enzyme catalyses L-seryl-[protein] + UTP = O-(5'-uridylyl)-L-seryl-[protein] + diphosphate. It carries out the reaction L-tyrosyl-[protein] + UTP = O-(5'-uridylyl)-L-tyrosyl-[protein] + diphosphate. Nucleotidyltransferase involved in the post-translational modification of proteins. It can catalyze the addition of adenosine monophosphate (AMP) or uridine monophosphate (UMP) to a protein, resulting in modifications known as AMPylation and UMPylation. The protein is Protein nucleotidyltransferase YdiU of Roseobacter denitrificans (strain ATCC 33942 / OCh 114) (Erythrobacter sp. (strain OCh 114)).